The sequence spans 237 residues: 1-(5-phosphoribosyl)-5-[(5-phosphoribosylamino)methylideneamino] imidazole-4-carboxamide isomerase (237 aa).

The Proton acceptor role is filled by Asp8. Asp129 acts as the Proton donor in catalysis.

This sequence belongs to the HisA/HisF family.

It is found in the cytoplasm. It carries out the reaction 1-(5-phospho-beta-D-ribosyl)-5-[(5-phospho-beta-D-ribosylamino)methylideneamino]imidazole-4-carboxamide = 5-[(5-phospho-1-deoxy-D-ribulos-1-ylimino)methylamino]-1-(5-phospho-beta-D-ribosyl)imidazole-4-carboxamide. It functions in the pathway amino-acid biosynthesis; L-histidine biosynthesis; L-histidine from 5-phospho-alpha-D-ribose 1-diphosphate: step 4/9. The sequence is that of 1-(5-phosphoribosyl)-5-[(5-phosphoribosylamino)methylideneamino] imidazole-4-carboxamide isomerase from Roseiflexus castenholzii (strain DSM 13941 / HLO8).